A 247-amino-acid polypeptide reads, in one-letter code: 14-3-3 protein gamma-B (247 aa).

It belongs to the 14-3-3 family. In terms of assembly, homodimer, and heterodimer with other family members.

It is found in the cytoplasm. Adapter protein implicated in the regulation of a large spectrum of both general and specialized signaling pathways. Binds to a large number of partners, usually by recognition of a phosphoserine or phosphothreonine motif. Binding generally results in the modulation of the activity of the binding partner. The protein is 14-3-3 protein gamma-B (ywhag-b) of Xenopus laevis (African clawed frog).